Reading from the N-terminus, the 314-residue chain is Endo-beta-N-acetylglucosaminidase (314 aa).

An N-terminal signal peptide occupies residues 1–47 (MQFGIVAAIADGGRTARAGGSVRPPRRPPASHTAWGLPRGRPTGQPH). Positions 14–54 (RTARAGGSVRPPRRPPASHTAWGLPRGRPTGQPHATPTKSG) are disordered. Residues 55-309 (PTSIAYVEVN…SSMTKVLYGQ (255 aa)) enclose the GH18 domain. Glutamate 175 functions as the Proton donor in the catalytic mechanism.

The protein belongs to the glycosyl hydrolase 18 family. In terms of assembly, monomer.

The protein localises to the secreted. It carries out the reaction an N(4)-(oligosaccharide-(1-&gt;3)-[oligosaccharide-(1-&gt;6)]-beta-D-Man-(1-&gt;4)-beta-D-GlcNAc-(1-&gt;4)-alpha-D-GlcNAc)-L-asparaginyl-[protein] + H2O = an oligosaccharide-(1-&gt;3)-[oligosaccharide-(1-&gt;6)]-beta-D-Man-(1-&gt;4)-D-GlcNAc + N(4)-(N-acetyl-beta-D-glucosaminyl)-L-asparaginyl-[protein]. In terms of biological role, cleaves asparagine-linked oligomannose and hybrid, but not complex, oligosaccharides from glycoproteins. This is Endo-beta-N-acetylglucosaminidase from Flavobacterium sp. (strain SK1022).